Consider the following 284-residue polypeptide: Phosphoribosylaminoimidazole-succinocarboxamide synthase (284 aa).

The protein belongs to the SAICAR synthetase family.

The catalysed reaction is 5-amino-1-(5-phospho-D-ribosyl)imidazole-4-carboxylate + L-aspartate + ATP = (2S)-2-[5-amino-1-(5-phospho-beta-D-ribosyl)imidazole-4-carboxamido]succinate + ADP + phosphate + 2 H(+). The protein operates within purine metabolism; IMP biosynthesis via de novo pathway; 5-amino-1-(5-phospho-D-ribosyl)imidazole-4-carboxamide from 5-amino-1-(5-phospho-D-ribosyl)imidazole-4-carboxylate: step 1/2. This Chromobacterium violaceum (strain ATCC 12472 / DSM 30191 / JCM 1249 / CCUG 213 / NBRC 12614 / NCIMB 9131 / NCTC 9757 / MK) protein is Phosphoribosylaminoimidazole-succinocarboxamide synthase.